An 810-amino-acid polypeptide reads, in one-letter code: Phospholipase D alpha 1 (810 aa).

A propeptide spanning residues 1 to 36 is cleaved from the precursor; it reads MAQHLLHGTLHATIYEVDDLHTGGLRSGFFGKILAN. In terms of domain architecture, C2 spans 1–126; that stretch reads MAQHLLHGTL…IHGEEVDQWV (126 aa). Residue D187 coordinates Ca(2+). The PLD phosphodiesterase 1 domain occupies 327–366; sequence AMFTHHQKIVVVDSEMPSRGGSQMRRIVSFVGGIDLCDGR. Active-site residues include H332, K334, and D339. H332 is a binding site for a 1,2-diacyl-sn-glycero-3-phosphate. Ca(2+)-binding residues include H372 and H406. A 1,2-diacyl-sn-glycero-3-phosphate is bound by residues Q522 and H661. The region spanning 656 to 683 is the PLD phosphodiesterase 2 domain; it reads FMIYVHTKMMIVDDEYIIIGSANINQRS. Active-site residues include H661, K663, and D668. Position 722 (E722) interacts with Ca(2+).

This sequence belongs to the phospholipase D family. C2-PLD subfamily. The cofactor is Ca(2+).

It is found in the cytoplasm. The protein resides in the membrane. It catalyses the reaction a 1,2-diacyl-sn-glycero-3-phosphocholine + H2O = a 1,2-diacyl-sn-glycero-3-phosphate + choline + H(+). Functionally, hydrolyzes glycerol-phospholipids at the terminal phosphodiesteric bond. Plays an important role in various cellular processes, including phytohormone action, vesicular trafficking, secretion, cytoskeletal arrangement, meiosis, tumor promotion, pathogenesis, membrane deterioration and senescence. This chain is Phospholipase D alpha 1 (PLD1), found in Brassica oleracea var. capitata (Cabbage).